A 41-amino-acid chain; its full sequence is Cuticle protein 32 (41 aa).

Tandem repeats lie at residues 17-20 (AAPA), 25-28 (AAPA), 31-34 (AAPA), and 38-41 (AAPA).

Functionally, component of the cuticle of migratory locust which contains more than 100 different structural proteins. This Locusta migratoria (Migratory locust) protein is Cuticle protein 32.